Consider the following 226-residue polypeptide: UPF0173 metal-dependent hydrolase Tpet_1587 (226 aa).

It belongs to the UPF0173 family.

This Thermotoga petrophila (strain ATCC BAA-488 / DSM 13995 / JCM 10881 / RKU-1) protein is UPF0173 metal-dependent hydrolase Tpet_1587.